The primary structure comprises 353 residues: 3-isopropylmalate dehydrogenase (353 aa).

73-86 (GPQYDTLDRPLRPE) is a binding site for NAD(+). Arg-93, Arg-103, Arg-131, and Asp-220 together coordinate substrate. Mg(2+)-binding residues include Asp-220, Asp-244, and Asp-248. NAD(+) is bound at residue 278-290 (GSAPDIAGKNLAN).

The protein belongs to the isocitrate and isopropylmalate dehydrogenases family. LeuB type 1 subfamily. Homodimer. It depends on Mg(2+) as a cofactor. The cofactor is Mn(2+).

The protein localises to the cytoplasm. It catalyses the reaction (2R,3S)-3-isopropylmalate + NAD(+) = 4-methyl-2-oxopentanoate + CO2 + NADH. The protein operates within amino-acid biosynthesis; L-leucine biosynthesis; L-leucine from 3-methyl-2-oxobutanoate: step 3/4. In terms of biological role, catalyzes the oxidation of 3-carboxy-2-hydroxy-4-methylpentanoate (3-isopropylmalate) to 3-carboxy-4-methyl-2-oxopentanoate. The product decarboxylates to 4-methyl-2 oxopentanoate. This is 3-isopropylmalate dehydrogenase from Thiobacillus denitrificans (strain ATCC 25259 / T1).